Here is a 391-residue protein sequence, read N- to C-terminus: MESETEPEPVTLLVKSPNQRHRDLELSGDRGWSVGHLKAHLSRVYPERPRPEDQRLIYSGKLLLDHQCLRDLLPKQEKRHVLHLVCNVKSPSKMPEINAKVAESTEEPAGSNRGQYPEDSSSDGLRQREVLRNLSSPGWENISRPEAAQQAFQGLGPGFSGYTPYGWLQLSWFQQIYARQYYMQYLAATAASGAFVPPPSAQEIPVVSAPAPAPIHNQFPAENQPANQNAAPQVVVNPGANQNLRMNAQGGPIVEEDDEINRDWLDWTYSAATFSVFLSILYFYSSLSRFLMVMGATVVMYLHHVGWFPFRPRPVQNFPNDGPPPDIVNQDPNNNLQEGTDPETEDPNHVPPDRGVLDGEQTGPSFMSTAWLVFKTFFASLLPEGPPAIAN.

Methionine 1 carries the N-acetylmethionine modification. At 1 to 263 the chain is on the cytoplasmic side; sequence MESETEPEPV…VEEDDEINRD (263 aa). Positions 10-72 constitute a Ubiquitin-like domain; that stretch reads VTLLVKSPNQ…LLDHQCLRDL (63 aa). Positions 100 to 126 are disordered; that stretch reads KVAESTEEPAGSNRGQYPEDSSSDGLR. Positions 112 to 124 are enriched in polar residues; that stretch reads NRGQYPEDSSSDG. Positions 115–200 are interaction with UBQLN1; it reads QYPEDSSSDG…ASGAFVPPPS (86 aa). Phosphoserine is present on serine 135. The helical transmembrane segment at 264 to 284 threads the bilayer; sequence WLDWTYSAATFSVFLSILYFY. Over 285 to 289 the chain is Lumenal; that stretch reads SSLSR. The helical transmembrane segment at 290–310 threads the bilayer; it reads FLMVMGATVVMYLHHVGWFPF. At 311–391 the chain is on the cytoplasmic side; that stretch reads RPRPVQNFPN…LPEGPPAIAN (81 aa). The disordered stretch occupies residues 318–359; sequence FPNDGPPPDIVNQDPNNNLQEGTDPETEDPNHVPPDRGVLDG. The segment covering 346-357 has biased composition (basic and acidic residues); it reads DPNHVPPDRGVL.

As to quaternary structure, interacts with PSEN1 and PSEN2. Interacts with UBXN6. Interacts with UBQLN1, UBQLN2 and UBQLN4. Component of the HRD1 complex, which comprises at least SYNV1/HRD1, FAM8A1, HERPUD1/HERP, OS9, SEL1L and UBE2J1. FAM8A1 binding to SYNV1 may promote recruitment of HERPUD1 to the HRD1 complex.

It localises to the endoplasmic reticulum membrane. Component of the endoplasmic reticulum quality control (ERQC) system also called ER-associated degradation (ERAD) involved in ubiquitin-dependent degradation of misfolded endoplasmic reticulum proteins. Binds to ubiquilins and this interaction is required for efficient degradation of CD3D via the ERAD pathway. This chain is Homocysteine-responsive endoplasmic reticulum-resident ubiquitin-like domain member 1 protein (HERPUD1), found in Pongo abelii (Sumatran orangutan).